Consider the following 1274-residue polypeptide: ABC multidrug transporter E (1274 aa).

A glycan (N-linked (GlcNAc...) asparagine) is linked at N48. One can recognise an ABC transmembrane type-1 1 domain in the interval 120–344 (FCFRVTGLRV…IASPLIIVSK (225 aa)). A run of 4 helical transmembrane segments spans residues 183–203 (LALL…LTLV), 205–225 (SSAL…MTKI), 280–300 (IFGI…SLAF), and 321–341 (VFFS…PLII). Positions 377 to 629 (IIFRDVRFTY…EGGVYRDLVN (253 aa)) constitute an ABC transporter 1 domain. 412–419 (GPSGSGKS) contributes to the ATP binding site. N473 and N580 each carry an N-linked (GlcNAc...) asparagine glycan. The next 2 membrane-spanning stretches (helical) occupy residues 697 to 717 (VAVL…SWLF) and 737 to 757 (FWAL…STVG). The ABC transmembrane type-1 2 domain occupies 697 to 984 (VAVLISTAGA…FFSFASNFAQ (288 aa)). N792 is a glycosylation site (N-linked (GlcNAc...) asparagine). Transmembrane regions (helical) follow at residues 818–838 (FPLI…SFGW), 840–860 (LSLV…FMRI), and 924–944 (LIFA…FWYG). The region spanning 1023–1269 (VEFHDVSFRY…KGTYWQMVSS (247 aa)) is the ABC transporter 2 domain. N1044 carries an N-linked (GlcNAc...) asparagine glycan. 1057–1064 (GPSGCGKT) contacts ATP. The N-linked (GlcNAc...) asparagine glycan is linked to N1117.

Belongs to the ABC transporter superfamily. ABCB family. Multidrug resistance exporter (TC 3.A.1.201) subfamily.

Its subcellular location is the cell membrane. In terms of biological role, pleiotropic ABC efflux transporter that may be involved in A.fumigatus adaptation to azoles such as vorizonazole. The polypeptide is ABC multidrug transporter E (Aspergillus fumigatus (strain ATCC MYA-4609 / CBS 101355 / FGSC A1100 / Af293) (Neosartorya fumigata)).